The following is a 115-amino-acid chain: Large ribosomal subunit protein bL20c (115 aa).

It belongs to the bacterial ribosomal protein bL20 family.

It localises to the plastid. It is found in the chloroplast. Functionally, binds directly to 23S ribosomal RNA and is necessary for the in vitro assembly process of the 50S ribosomal subunit. It is not involved in the protein synthesizing functions of that subunit. The chain is Large ribosomal subunit protein bL20c from Cycas taitungensis (Prince sago).